Reading from the N-terminus, the 500-residue chain is Ent-kaurene oxidase P450-4 (500 aa).

A helical membrane pass occupies residues 6–26; that stretch reads VHWLIYVAFGAWLCSYVIHVL. Asn240 is a glycosylation site (N-linked (GlcNAc...) asparagine). Cys441 is a heme binding site. Asn475 carries an N-linked (GlcNAc...) asparagine glycan.

It belongs to the cytochrome P450 family. The cofactor is heme.

It is found in the membrane. The catalysed reaction is ent-kaur-16-ene + 3 reduced [NADPH--hemoprotein reductase] + 3 O2 = ent-kaur-16-en-19-oate + 3 oxidized [NADPH--hemoprotein reductase] + 4 H2O + 4 H(+). Its pathway is plant hormone biosynthesis; gibberellin biosynthesis. Ent-kaurene oxidase; part of the gene cluster that mediates the biosynthesis of gibberellins (GAs), diterpenoids that may provide a selective advantage during infection of the preferred host plant, rice. Gibberellins (GAs) are diterpenoids and are synthesized via the mevalonate pathway. Biosynthesis of the major metabolite GA3 (gibberellic acid) from geranylgeranyl diphosphate (GGPP) requires 13 steps. The GGPP produced by the geranylgeranyl diphosphate synthase GGS2 is converted to ent-kaurene via ent-copalyldiphosphate in a two-step cyclization reaction performed by the bifunctional ent-copalyl diphosphate synthase/ent-kaurene synthase enzyme (CPS/KS). Ent-Kaurene is metabolized to GAs by a series of oxidation reactions catalyzed by cytochrome P450 monooxygenases. Cytochrome P450 monooxygenase P450-4 is an ent-kaurene oxidase that catalyzes the three oxidation steps between ent-kaurene and ent-kaurenoic acid. The highly multifunctional cytochrome P450 monooxygenase P450-1 then catalyzes four steps involving oxidation at two carbon atoms, in the main pathway from ent-kaurenoic acid to GA14 via GA12-aldehyde as well as producing kaurenolides and fujenoic acids as by-products. The cytochrome P450 monooxygenase P450-2 then converts GA14 to GA4 by removal of C-20. GA4 is further converted to GA7 by the GA4 desaturase DES via 1,2-desaturation before cytochrome P450 monooxygenase P450-3, a 13-hydroxylase, hydroxylates GA7 to GA3, the final product of the GA-biosynthetic pathway. This is Ent-kaurene oxidase P450-4 from Gibberella fujikuroi (strain CBS 195.34 / IMI 58289 / NRRL A-6831) (Bakanae and foot rot disease fungus).